A 175-amino-acid polypeptide reads, in one-letter code: Diacylglycerol kinase (175 aa).

The next 2 helical transmembrane spans lie at 55-75 and 96-116; these read VAPN…YAFA and LLHL…LVMI. Glu-118 serves as the catalytic Proton acceptor. Residue Glu-125 coordinates a divalent metal cation. The chain crosses the membrane as a helical span at residues 151–171; it reads VLLAAIAAVIVGGCLLLPPLL.

This sequence belongs to the bacterial diacylglycerol kinase family. The cofactor is Mg(2+).

The protein resides in the cell membrane. It carries out the reaction a 1,2-diacyl-sn-glycerol + ATP = a 1,2-diacyl-sn-glycero-3-phosphate + ADP + H(+). Its function is as follows. Catalyzes the ATP-dependent phosphorylation of sn-l,2-diacylglycerol (DAG) to phosphatidic acid. The polypeptide is Diacylglycerol kinase (dgkA) (Synechocystis sp. (strain ATCC 27184 / PCC 6803 / Kazusa)).